The chain runs to 319 residues: MKTIGVLTSGGDSPGMNAAIRAVVRSGIYNGCKIMGIKQGYSGLINAKIEEMNLSSVADIIHRGGTILRTARCEEFRTEEGRKKALNVLKVLKIDGVVVIGGDGSFQGAKKLSELGIPTVAVPGTIDNDLGYSDYTIGFDTAMNTVLDAISKIRDTSTSHGRANIIEVMGRHCGDIALYTGLAGGAESIIIPEVGLDIDEICRKLLQGKNRGKLHSLIVLAEGVGGAIDLGKIIEEKTGIETRSTVFGHIQRGGSPTAFDRILASKMGARAVDLLIEEKGNRAVGIKGNQIFDMDIEEALNIENKFDQETFELAKILSI.

Residue Gly11 participates in ATP binding. Position 21–25 (21–25 (RAVVR)) interacts with ADP. ATP is bound by residues 72–73 (RC) and 102–105 (GDGS). Position 103 (Asp103) interacts with Mg(2+). 125 to 127 (TID) is a substrate binding site. The active-site Proton acceptor is the Asp127. ADP is bound at residue Arg154. Substrate is bound by residues Arg162 and 169-171 (MGR). ADP-binding positions include 185-187 (GAE), Arg211, and 213-215 (KLH). Residues Glu222, Arg243, and 249-252 (HIQR) each bind substrate.

It belongs to the phosphofructokinase type A (PFKA) family. ATP-dependent PFK group I subfamily. Prokaryotic clade 'B1' sub-subfamily. In terms of assembly, homotetramer. Mg(2+) serves as cofactor.

It is found in the cytoplasm. It catalyses the reaction beta-D-fructose 6-phosphate + ATP = beta-D-fructose 1,6-bisphosphate + ADP + H(+). Its pathway is carbohydrate degradation; glycolysis; D-glyceraldehyde 3-phosphate and glycerone phosphate from D-glucose: step 3/4. Its activity is regulated as follows. Allosterically activated by ADP and other diphosphonucleosides, and allosterically inhibited by phosphoenolpyruvate. Catalyzes the phosphorylation of D-fructose 6-phosphate to fructose 1,6-bisphosphate by ATP, the first committing step of glycolysis. This Alkaliphilus metalliredigens (strain QYMF) protein is ATP-dependent 6-phosphofructokinase.